Consider the following 479-residue polypeptide: Ribosomal RNA small subunit methyltransferase F (479 aa).

S-adenosyl-L-methionine is bound by residues 125–131, Glu149, Asp176, and Asp194; that span reads AAAPGSK. Cys247 functions as the Nucleophile in the catalytic mechanism.

The protein belongs to the class I-like SAM-binding methyltransferase superfamily. RsmB/NOP family.

The protein localises to the cytoplasm. It catalyses the reaction cytidine(1407) in 16S rRNA + S-adenosyl-L-methionine = 5-methylcytidine(1407) in 16S rRNA + S-adenosyl-L-homocysteine + H(+). In terms of biological role, specifically methylates the cytosine at position 1407 (m5C1407) of 16S rRNA. The polypeptide is Ribosomal RNA small subunit methyltransferase F (Salmonella paratyphi C (strain RKS4594)).